We begin with the raw amino-acid sequence, 670 residues long: UvrABC system protein B (670 aa).

Residues E26–R183 form the Helicase ATP-binding domain. Residue G39 to T46 coordinates ATP. The Beta-hairpin signature appears at Y92–V115. The 167-residue stretch at Q431–L597 folds into the Helicase C-terminal domain. A disordered region spans residues G600–N620. Residues D630–Q665 enclose the UVR domain.

It belongs to the UvrB family. Forms a heterotetramer with UvrA during the search for lesions. Interacts with UvrC in an incision complex.

It is found in the cytoplasm. In terms of biological role, the UvrABC repair system catalyzes the recognition and processing of DNA lesions. A damage recognition complex composed of 2 UvrA and 2 UvrB subunits scans DNA for abnormalities. Upon binding of the UvrA(2)B(2) complex to a putative damaged site, the DNA wraps around one UvrB monomer. DNA wrap is dependent on ATP binding by UvrB and probably causes local melting of the DNA helix, facilitating insertion of UvrB beta-hairpin between the DNA strands. Then UvrB probes one DNA strand for the presence of a lesion. If a lesion is found the UvrA subunits dissociate and the UvrB-DNA preincision complex is formed. This complex is subsequently bound by UvrC and the second UvrB is released. If no lesion is found, the DNA wraps around the other UvrB subunit that will check the other stand for damage. This Yersinia enterocolitica serotype O:8 / biotype 1B (strain NCTC 13174 / 8081) protein is UvrABC system protein B.